The chain runs to 126 residues: Sperm-specific H1/protamine-like protein type 2 (126 aa).

Residues 5-84 (KKPTTLSMIV…GATGSFRVGK (80 aa)) form the H15 domain. The segment at 74–126 (SGATGSFRVGKAPASPKKAKKAKSPKKKSSKKSKNKSNNAKAKKSPKKKADSN) is disordered. Basic residues predominate over residues 90–120 (KKAKKAKSPKKKSSKKSKNKSNNAKAKKSPK).

In terms of processing, OE2 and OE3 are produced by post-translational cleavage of a common precursor. In terms of tissue distribution, sperm.

It is found in the nucleus. The protein localises to the chromosome. Linker histones are implicated in chromatin remodeling and/or transcriptional regulation during spermiogenesis, the process of spermatid maturation into spermatozoa. Protamines substitute for histones in the chromatin of sperm during the haploid phase of spermatogenesis. They compact sperm DNA into a highly condensed, stable and inactive complex. This chain is Sperm-specific H1/protamine-like protein type 2, found in Ostrea edulis (Native oyster).